We begin with the raw amino-acid sequence, 89 residues long: Probable Fe(2+)-trafficking protein (89 aa).

Belongs to the Fe(2+)-trafficking protein family.

In terms of biological role, could be a mediator in iron transactions between iron acquisition and iron-requiring processes, such as synthesis and/or repair of Fe-S clusters in biosynthetic enzymes. The chain is Probable Fe(2+)-trafficking protein from Acinetobacter baumannii (strain AB0057).